The following is a 461-amino-acid chain: tRNA modification GTPase MnmE (461 aa).

(6S)-5-formyl-5,6,7,8-tetrahydrofolate contacts are provided by Arg-27, Glu-89, and Arg-128. The region spanning 224–382 (GLATAIVGRP…LENAIEKLFF (159 aa)) is the TrmE-type G domain. Asn-234 contributes to the K(+) binding site. GTP contacts are provided by residues 234–239 (NVGKSS), 253–259 (TDIAGTT), and 278–281 (DTAG). A Mg(2+)-binding site is contributed by Ser-238. K(+) contacts are provided by Thr-253, Ile-255, and Thr-258. Thr-259 contributes to the Mg(2+) binding site. Lys-461 is a binding site for (6S)-5-formyl-5,6,7,8-tetrahydrofolate.

The protein belongs to the TRAFAC class TrmE-Era-EngA-EngB-Septin-like GTPase superfamily. TrmE GTPase family. In terms of assembly, homodimer. Heterotetramer of two MnmE and two MnmG subunits. Requires K(+) as cofactor.

Its subcellular location is the cytoplasm. Exhibits a very high intrinsic GTPase hydrolysis rate. Involved in the addition of a carboxymethylaminomethyl (cmnm) group at the wobble position (U34) of certain tRNAs, forming tRNA-cmnm(5)s(2)U34. In Lactobacillus gasseri (strain ATCC 33323 / DSM 20243 / BCRC 14619 / CIP 102991 / JCM 1131 / KCTC 3163 / NCIMB 11718 / NCTC 13722 / AM63), this protein is tRNA modification GTPase MnmE.